A 586-amino-acid chain; its full sequence is Actin-related protein 9 (586 aa).

The disordered stretch occupies residues 141–169 (STPIVDKDADVDPLQRSTPDDTEPNSEEN).

Belongs to the actin family. ARP8 subfamily.

This Oryza sativa subsp. japonica (Rice) protein is Actin-related protein 9 (ARP9).